A 21-amino-acid polypeptide reads, in one-letter code: Large ribosomal subunit protein uL29 (21 aa).

It belongs to the universal ribosomal protein uL29 family.

The protein is Large ribosomal subunit protein uL29 (rpmC) of Brevundimonas diminuta (Pseudomonas diminuta).